The sequence spans 244 residues: Probable transcriptional regulatory protein DR_2548 (244 aa).

Residues 1-23 form a disordered region; it reads MAGHSKWAQIKRKKGANDKKRSA.

It belongs to the TACO1 family.

The protein localises to the cytoplasm. The protein is Probable transcriptional regulatory protein DR_2548 of Deinococcus radiodurans (strain ATCC 13939 / DSM 20539 / JCM 16871 / CCUG 27074 / LMG 4051 / NBRC 15346 / NCIMB 9279 / VKM B-1422 / R1).